We begin with the raw amino-acid sequence, 287 residues long: Bifunctional protein FolD (287 aa).

Residues 167 to 169 (GRS) and Thr192 each bind NADP(+).

It belongs to the tetrahydrofolate dehydrogenase/cyclohydrolase family. In terms of assembly, homodimer.

The enzyme catalyses (6R)-5,10-methylene-5,6,7,8-tetrahydrofolate + NADP(+) = (6R)-5,10-methenyltetrahydrofolate + NADPH. It carries out the reaction (6R)-5,10-methenyltetrahydrofolate + H2O = (6R)-10-formyltetrahydrofolate + H(+). Its pathway is one-carbon metabolism; tetrahydrofolate interconversion. Catalyzes the oxidation of 5,10-methylenetetrahydrofolate to 5,10-methenyltetrahydrofolate and then the hydrolysis of 5,10-methenyltetrahydrofolate to 10-formyltetrahydrofolate. The polypeptide is Bifunctional protein FolD (Sorangium cellulosum (strain So ce56) (Polyangium cellulosum (strain So ce56))).